The chain runs to 296 residues: Lipoyl synthase (296 aa).

[4Fe-4S] cluster-binding residues include cysteine 34, cysteine 39, cysteine 45, cysteine 60, cysteine 64, cysteine 67, and serine 276. One can recognise a Radical SAM core domain in the interval 46–265 (WGEGTATFMI…GEVALSMGFK (220 aa)).

It belongs to the radical SAM superfamily. Lipoyl synthase family. [4Fe-4S] cluster is required as a cofactor.

Its subcellular location is the cytoplasm. The enzyme catalyses [[Fe-S] cluster scaffold protein carrying a second [4Fe-4S](2+) cluster] + N(6)-octanoyl-L-lysyl-[protein] + 2 oxidized [2Fe-2S]-[ferredoxin] + 2 S-adenosyl-L-methionine + 4 H(+) = [[Fe-S] cluster scaffold protein] + N(6)-[(R)-dihydrolipoyl]-L-lysyl-[protein] + 4 Fe(3+) + 2 hydrogen sulfide + 2 5'-deoxyadenosine + 2 L-methionine + 2 reduced [2Fe-2S]-[ferredoxin]. It participates in protein modification; protein lipoylation via endogenous pathway; protein N(6)-(lipoyl)lysine from octanoyl-[acyl-carrier-protein]: step 2/2. Its function is as follows. Catalyzes the radical-mediated insertion of two sulfur atoms into the C-6 and C-8 positions of the octanoyl moiety bound to the lipoyl domains of lipoate-dependent enzymes, thereby converting the octanoylated domains into lipoylated derivatives. The protein is Lipoyl synthase of Pyrobaculum arsenaticum (strain DSM 13514 / JCM 11321 / PZ6).